A 517-amino-acid chain; its full sequence is GMP synthase [glutamine-hydrolyzing] (517 aa).

In terms of domain architecture, Glutamine amidotransferase type-1 spans Lys-9 to Asp-202. Cys-86 (nucleophile) is an active-site residue. Active-site residues include His-176 and Glu-178. The GMPS ATP-PPase domain maps to Trp-203–Arg-392. Ser-230–Ser-236 serves as a coordination point for ATP.

In terms of assembly, homodimer.

The enzyme catalyses XMP + L-glutamine + ATP + H2O = GMP + L-glutamate + AMP + diphosphate + 2 H(+). The protein operates within purine metabolism; GMP biosynthesis; GMP from XMP (L-Gln route): step 1/1. In terms of biological role, catalyzes the synthesis of GMP from XMP. The chain is GMP synthase [glutamine-hydrolyzing] from Streptococcus mutans serotype c (strain ATCC 700610 / UA159).